The primary structure comprises 379 residues: DnaJ homolog subfamily B member 14 (379 aa).

Residues 1 to 244 (MEGNRDEAEK…GHEREEERGD (244 aa)) lie on the Cytoplasmic side of the membrane. The segment at 55–94 (STAGNSPHCRKPSGSGDQSKPNCTKDSTSGSGEGGKGYTK) is disordered. Residues 69-84 (SGDQSKPNCTKDSTSG) show a composition bias toward polar residues. A J domain is found at 108–172 (NYYEVLGVTK…EKRKQYDLTG (65 aa)). The disordered stretch occupies residues 219–241 (SNGRAGYSQQHQHRHSGHEREEE). Residues 245–265 (GGFSVFIQLMPIIVLILVSLL) traverse the membrane as a helical segment. The Lumenal portion of the chain corresponds to 266-379 (SQLMVSNPPY…ERLTSLYKGG (114 aa)).

It belongs to the DnaJ family. DNAJB12/DNAJB14 subfamily. In terms of assembly, interacts (via J domain) with HSPA8/Hsc70. Forms a multiprotein complex, at least composed of DNAJB12, DNAJB14, HSPA8/Hsc70 and SGTA; interaction with DNAJB14 and HSPA8/Hsc70 is direct.

It is found in the endoplasmic reticulum membrane. Its subcellular location is the nucleus membrane. In terms of biological role, acts as a co-chaperone with HSPA8/Hsc70; required to promote protein folding and trafficking, prevent aggregation of client proteins, and promote unfolded proteins to endoplasmic reticulum-associated degradation (ERAD) pathway. Acts by determining HSPA8/Hsc70's ATPase and polypeptide-binding activities. Can also act independently of HSPA8/Hsc70: together with DNAJB12, acts as a chaperone that promotes maturation of potassium channels KCND2 and KCNH2 by stabilizing nascent channel subunits and assembling them into tetramers. While stabilization of nascent channel proteins is dependent on HSPA8/Hsc70, the process of oligomerization of channel subunits is independent of HSPA8/Hsc70. When overexpressed, forms membranous structures together with DNAJB12 and HSPA8/Hsc70 within the nucleus; the role of these structures, named DJANGOs, is still unclear. (Microbial infection) In case of infection by polyomavirus, involved in the virus endoplasmic reticulum membrane penetration and infection. The sequence is that of DnaJ homolog subfamily B member 14 from Homo sapiens (Human).